A 418-amino-acid chain; its full sequence is Serine--tRNA ligase (418 aa).

Thr231–Glu233 lines the L-serine pocket. Residue Arg262–Glu264 participates in ATP binding. Glu285 is a binding site for L-serine. Position 349–352 (Glu349–Ser352) interacts with ATP. Position 384 (Ser384) interacts with L-serine.

It belongs to the class-II aminoacyl-tRNA synthetase family. Type-1 seryl-tRNA synthetase subfamily. As to quaternary structure, homodimer. The tRNA molecule binds across the dimer.

It localises to the cytoplasm. It carries out the reaction tRNA(Ser) + L-serine + ATP = L-seryl-tRNA(Ser) + AMP + diphosphate + H(+). The enzyme catalyses tRNA(Sec) + L-serine + ATP = L-seryl-tRNA(Sec) + AMP + diphosphate + H(+). It participates in aminoacyl-tRNA biosynthesis; selenocysteinyl-tRNA(Sec) biosynthesis; L-seryl-tRNA(Sec) from L-serine and tRNA(Sec): step 1/1. Its function is as follows. Catalyzes the attachment of serine to tRNA(Ser). Is also able to aminoacylate tRNA(Sec) with serine, to form the misacylated tRNA L-seryl-tRNA(Sec), which will be further converted into selenocysteinyl-tRNA(Sec). The sequence is that of Serine--tRNA ligase from Coprothermobacter proteolyticus (strain ATCC 35245 / DSM 5265 / OCM 4 / BT).